A 955-amino-acid polypeptide reads, in one-letter code: Eukaryotic translation initiation factor 3 subunit A (955 aa).

Residues 96 to 127 (LSLAEQRVTDAQAQADKIADEEEADDLEAEET) adopt a coiled-coil conformation. The PCI domain occupies 325–498 (YQRVASFVLL…RSVLFEEVRA (174 aa)). Coiled-coil stretches lie at residues 533-636 (AEAR…INAK) and 752-860 (KREA…KRAG). Basic and acidic residues predominate over residues 789–858 (RAEEEAKAAA…ELEAKLEAKR (70 aa)). Residues 789–955 (RAEEEAKAAA…GRYIPPSQRN (167 aa)) are disordered.

The protein belongs to the eIF-3 subunit A family. In terms of assembly, component of the eukaryotic translation initiation factor 3 (eIF-3) complex.

Its subcellular location is the cytoplasm. RNA-binding component of the eukaryotic translation initiation factor 3 (eIF-3) complex, which is involved in protein synthesis of a specialized repertoire of mRNAs and, together with other initiation factors, stimulates binding of mRNA and methionyl-tRNAi to the 40S ribosome. The eIF-3 complex specifically targets and initiates translation of a subset of mRNAs involved in cell proliferation. This Yarrowia lipolytica (strain CLIB 122 / E 150) (Yeast) protein is Eukaryotic translation initiation factor 3 subunit A.